A 918-amino-acid chain; its full sequence is Exostosin-like 3 (918 aa).

Over 1–30 the chain is Cytoplasmic; the sequence is MTGYTMLRNGGVGNGGQTCMLRWSNRIRLT. Residues 1 to 140 are required for interaction with REG3A; sequence MTGYTMLRNG…LKNVISQTEH (140 aa). Residues 31–51 form a helical; Signal-anchor for type II membrane protein membrane-spanning segment; sequence WLSFTLFIILVFFPLIAHYYL. At 52-918 the chain is on the lumenal side; sequence TTLDEADEAG…HDKTKCFKFI (867 aa). 2 disulfides stabilise this stretch: cysteine 177-cysteine 182 and cysteine 188-cysteine 236. An N-linked (GlcNAc...) asparagine glycan is attached at asparagine 290. Position 361 is a phosphoserine (serine 361). The cysteines at positions 399 and 414 are disulfide-linked. A glycan (N-linked (GlcNAc...) asparagine) is linked at asparagine 591. Residues leucine 667, arginine 671, asparagine 696, asparagine 722, arginine 727, aspartate 743, aspartate 744, and aspartate 745 each contribute to the UDP-N-acetyl-alpha-D-glucosamine site. Aspartate 745 is a binding site for Mn(2+). Asparagine 789 is a glycosylation site (N-linked (GlcNAc...) asparagine). Residues cysteine 830 and cysteine 878 are joined by a disulfide bond. 3 residues coordinate UDP-N-acetyl-alpha-D-glucosamine: glutamate 831, aspartate 832, and arginine 875. Aspartate 832 is an active-site residue.

Belongs to the glycosyltransferase 47 family. In terms of assembly, homodimer; disulfide-linked. Interacts with REG3A. Mn(2+) serves as cofactor. Expressed in pancreatic islet beta-cells. Expressed in lung epithelial cells. Expressed in microglia.

The protein resides in the endoplasmic reticulum membrane. Its subcellular location is the golgi apparatus. It is found in the cell membrane. It localises to the nucleus. The enzyme catalyses 3-O-(beta-D-GlcA-(1-&gt;3)-beta-D-Gal-(1-&gt;3)-beta-D-Gal-(1-&gt;4)-beta-D-Xyl)-L-seryl-[protein] + UDP-N-acetyl-alpha-D-glucosamine = 3-O-(alpha-D-GlcNAc-(1-&gt;4)-beta-D-GlcA-(1-&gt;3)-beta-D-Gal-(1-&gt;3)-beta-D-Gal-(1-&gt;4)-beta-D-Xyl)-L-seryl-[protein] + UDP + H(+). The protein operates within glycan metabolism; heparan sulfate biosynthesis. In terms of biological role, glycosyltransferase which regulates the biosynthesis of heparan sulfate (HS). Initiates HS synthesis by transferring the first N-acetyl-alpha-D-glucosamine (alpha-GlcNAc) residue (GlcNAcT-I activity) to the tetrasaccharide linker (GlcA-Gal-Gal-Xyl-)Ser core linker. May also transfer alpha-GlcNAc residues during HS elongation (GlcNAcT-II activity). Lacks glucuronyl transferase II (GlcAT-II) activity. Important for both skeletal development and hematopoiesis, through the formation of HS proteoglycans (HSPGs). Through the synthesis of HS, regulates postnatal pancreatic islet maturation and insulin secretion. Functionally, receptor for REG3A, REG3B and REG3G, induces the activation of downstream signaling pathways such as PI3K-AKT or RAS-RAF-MEK-ERK signaling pathway. Required for the function of REG3A in regulating keratinocyte proliferation and differentiation. Required for the inhibition of skin inflammation mediated by REG3A through the activation of PI3K-AKT-STAT3 pathway. Required for the function of REG3A and REG3G in glucose tolerance in pancreas. Expressed in microglia, is activated by nociceptor-derived REG3G in response to endotoxins, leading to the inhibition of kynurenine pathway to prevent endotoxic death. This is Exostosin-like 3 from Mus musculus (Mouse).